The primary structure comprises 464 residues: Dihydrolipoyl dehydrogenase (464 aa).

Residues 36-44 (EGAALGGTC), Lys53, and Ala119 contribute to the FAD site. Cys44 and Cys49 are oxidised to a cystine. Residues 184 to 188 (GGGYI), Glu207, and 269 to 272 (AVGR) each bind NAD(+). FAD-binding residues include Asp311 and Ala319. Catalysis depends on His443, which acts as the Proton acceptor.

This sequence belongs to the class-I pyridine nucleotide-disulfide oxidoreductase family. Homodimer. FAD serves as cofactor.

It localises to the cytoplasm. It carries out the reaction N(6)-[(R)-dihydrolipoyl]-L-lysyl-[protein] + NAD(+) = N(6)-[(R)-lipoyl]-L-lysyl-[protein] + NADH + H(+). In terms of biological role, the branched-chain alpha-keto dehydrogenase complex catalyzes the overall conversion of alpha-keto acids to acyl-CoA and CO(2). It contains multiple copies of 3 enzymatic components: branched-chain alpha-keto acid decarboxylase (E1), lipoamide acyltransferase (E2) and lipoamide dehydrogenase (E3). The chain is Dihydrolipoyl dehydrogenase from Pseudomonas aeruginosa (strain ATCC 15692 / DSM 22644 / CIP 104116 / JCM 14847 / LMG 12228 / 1C / PRS 101 / PAO1).